A 174-amino-acid polypeptide reads, in one-letter code: Glycine-rich protein 5 (174 aa).

Residues 1 to 22 form the signal peptide; that stretch reads MASKSLFLVALLVGSFAFTSFA.

Mostly expressed in immature seed pods, and, to a lower extent, in stems and leaves. Present in phloem and epiderm in leaves, stems, flowers and fruits.

The protein resides in the vacuole. Functionally, involved in organ growth by promoting cell elongation processes. This is Glycine-rich protein 5 from Arabidopsis thaliana (Mouse-ear cress).